Consider the following 586-residue polypeptide: Dihydroxy-acid dehydratase 2 (586 aa).

Cys-68 contributes to the [2Fe-2S] cluster binding site. Residue Asp-100 coordinates Mg(2+). Cys-141 is a binding site for [2Fe-2S] cluster. Residues Asp-142 and Lys-143 each contribute to the Mg(2+) site. At Lys-143 the chain carries N6-carboxylysine. Residue Cys-213 participates in [2Fe-2S] cluster binding. Position 463 (Glu-463) interacts with Mg(2+). The active-site Proton acceptor is the Ser-489.

The protein belongs to the IlvD/Edd family. In terms of assembly, homodimer. Requires [2Fe-2S] cluster as cofactor. Mg(2+) serves as cofactor.

It carries out the reaction (2R)-2,3-dihydroxy-3-methylbutanoate = 3-methyl-2-oxobutanoate + H2O. The enzyme catalyses (2R,3R)-2,3-dihydroxy-3-methylpentanoate = (S)-3-methyl-2-oxopentanoate + H2O. Its pathway is amino-acid biosynthesis; L-isoleucine biosynthesis; L-isoleucine from 2-oxobutanoate: step 3/4. The protein operates within amino-acid biosynthesis; L-valine biosynthesis; L-valine from pyruvate: step 3/4. Functions in the biosynthesis of branched-chain amino acids. Catalyzes the dehydration of (2R,3R)-2,3-dihydroxy-3-methylpentanoate (2,3-dihydroxy-3-methylvalerate) into 2-oxo-3-methylpentanoate (2-oxo-3-methylvalerate) and of (2R)-2,3-dihydroxy-3-methylbutanoate (2,3-dihydroxyisovalerate) into 2-oxo-3-methylbutanoate (2-oxoisovalerate), the penultimate precursor to L-isoleucine and L-valine, respectively. This chain is Dihydroxy-acid dehydratase 2, found in Mesorhizobium japonicum (strain LMG 29417 / CECT 9101 / MAFF 303099) (Mesorhizobium loti (strain MAFF 303099)).